The primary structure comprises 405 residues: Serine/threonine transporter SstT (405 aa).

9 helical membrane passes run 13–33 (GNLVLQILAGILLGAAMATFS), 43–63 (IGNLFVGALKAVAPVLVFILV), 81–101 (IVVLYLFGTFSAALTAVILSF), 140–160 (ALMNANYIGILAWGVGLGLAL), 191–211 (FGIFGLVASTFATTGFDALAG), 215–235 (LLAVLLGAMAFIALVVNPMIV), 297–317 (MAGAAITITVLTLAAVHTMGI), 338–358 (ASGVAGGSLLLIPLACGLFGI), and 362–382 (IAMQVVAVGFIIGVIQDSAET).

The protein belongs to the dicarboxylate/amino acid:cation symporter (DAACS) (TC 2.A.23) family.

Its subcellular location is the cell inner membrane. The catalysed reaction is L-serine(in) + Na(+)(in) = L-serine(out) + Na(+)(out). The enzyme catalyses L-threonine(in) + Na(+)(in) = L-threonine(out) + Na(+)(out). Functionally, involved in the import of serine and threonine into the cell, with the concomitant import of sodium (symport system). This Vibrio cholerae serotype O1 (strain ATCC 39315 / El Tor Inaba N16961) protein is Serine/threonine transporter SstT.